A 79-amino-acid polypeptide reads, in one-letter code: Conotoxin ArMSGL-0124 (79 aa).

The signal sequence occupies residues 1–20; the sequence is MSRLGIMVLTLLLLVYMATS. The propeptide occupies 21–44; that stretch reads HQDAGEKQATQRDAINFRWKRSLT. Cystine bridges form between Cys-52/Cys-64, Cys-56/Cys-73, and Cys-63/Cys-77. Leu-78 carries the leucine amide modification.

This sequence belongs to the conotoxin O3 superfamily. In terms of tissue distribution, expressed by the venom duct.

The protein localises to the secreted. The polypeptide is Conotoxin ArMSGL-0124 (Conus arenatus (Sand-dusted cone)).